Here is a 373-residue protein sequence, read N- to C-terminus: Enoyl-[acyl-carrier-protein] reductase, mitochondrial (373 aa).

Residues 1-53 (MLVSRRLTGARARAPLLASLLEAWCRQGRTTSSYSAFSEPSHVRALVYGNHGD) constitute a mitochondrion transit peptide. Lys61 carries the post-translational modification N6-acetyllysine; alternate. Lys61 is modified (N6-succinyllysine; alternate). Residue Tyr94 is the Proton donor of the active site. NADP(+) is bound by residues Asn167, 193–196 (NSGV), and 216–218 (RDR). 2 positions are modified to N6-acetyllysine; alternate: Lys252 and Lys267. Residues Lys252 and Lys267 each carry the N6-succinyllysine; alternate modification. NADP(+) contacts are provided by residues 285–288 (YGGM) and 310–312 (FWL). Residue Lys316 is modified to N6-succinyllysine. Lys368 contacts NADP(+).

Belongs to the zinc-containing alcohol dehydrogenase family. Quinone oxidoreductase subfamily. Homodimer. In terms of assembly, interacts with PPARA in the nucleus and increases its activity.

The protein localises to the mitochondrion. The protein resides in the cytoplasm. Its subcellular location is the nucleus. It catalyses the reaction a 2,3-saturated acyl-[ACP] + NADP(+) = a (2E)-enoyl-[ACP] + NADPH + H(+). The catalysed reaction is (2E)-butenoyl-[ACP] + NADPH + H(+) = butanoyl-[ACP] + NADP(+). The enzyme catalyses (2E)-hexenoyl-[ACP] + NADPH + H(+) = hexanoyl-[ACP] + NADP(+). It carries out the reaction (2E)-octenoyl-[ACP] + NADPH + H(+) = octanoyl-[ACP] + NADP(+). It catalyses the reaction (2E)-decenoyl-[ACP] + NADPH + H(+) = decanoyl-[ACP] + NADP(+). The catalysed reaction is (2E)-dodecenoyl-[ACP] + NADPH + H(+) = dodecanoyl-[ACP] + NADP(+). The enzyme catalyses (2E)-tetradecenoyl-[ACP] + NADPH + H(+) = tetradecanoyl-[ACP] + NADP(+). It carries out the reaction (2E)-hexadecenoyl-[ACP] + NADPH + H(+) = hexadecanoyl-[ACP] + NADP(+). Catalyzes the NADPH-dependent reduction of trans-2-enoyl thioesters in mitochondrial fatty acid synthesis (fatty acid synthesis type II). Fatty acid chain elongation in mitochondria uses acyl carrier protein (ACP) as an acyl group carrier, but the enzyme accepts both ACP and CoA thioesters as substrates in vitro. Displays a preference for medium-chain over short- and long-chain substrates. May provide the octanoyl chain used for lipoic acid biosynthesis, regulating protein lipoylation and mitochondrial respiratory activity particularly in Purkinje cells. Involved in iron homeostasis; affecting Fe-S cluster assembly and ceramide metabolism. Required for proper morphology and bioenergetic functions of mitochondria. Required for maintenance of neurons. The chain is Enoyl-[acyl-carrier-protein] reductase, mitochondrial (Mecr) from Rattus norvegicus (Rat).